The following is a 247-amino-acid chain: ATP synthase subunit a, chloroplastic (247 aa).

Transmembrane regions (helical) follow at residues 38-58 (QVLITSWVVITILLGSVLIAV), 95-115 (VPFIGTMFLFIFVSNWSGALL), 134-154 (INTTVALALLTSAAYFYAGLS), 199-219 (LVVVVLVSLVPLVVPIPVMFL), and 220-240 (GLFTSGIQALIFATLAAAYIG).

It belongs to the ATPase A chain family. As to quaternary structure, F-type ATPases have 2 components, CF(1) - the catalytic core - and CF(0) - the membrane proton channel. CF(1) has five subunits: alpha(3), beta(3), gamma(1), delta(1), epsilon(1). CF(0) has four main subunits: a, b, b' and c.

Its subcellular location is the plastid. The protein localises to the chloroplast thylakoid membrane. In terms of biological role, key component of the proton channel; it plays a direct role in the translocation of protons across the membrane. This chain is ATP synthase subunit a, chloroplastic, found in Brachypodium distachyon (Purple false brome).